Consider the following 274-residue polypeptide: Large ribosomal subunit protein uL2cz/uL2cy (274 aa).

Disordered stretches follow at residues 1–23 (MAIH…SQVK) and 223–274 (MNPV…RRSK). Residues 7 to 23 (KTSTPSTRNGTVGSQVK) show a composition bias toward polar residues.

The protein belongs to the universal ribosomal protein uL2 family. Part of the 50S ribosomal subunit.

The protein localises to the plastid. Its subcellular location is the chloroplast. The sequence is that of Large ribosomal subunit protein uL2cz/uL2cy (rpl2-A) from Nandina domestica (Heavenly bamboo).